A 188-amino-acid polypeptide reads, in one-letter code: dCTP deaminase (188 aa).

DCTP is bound by residues lysine 111–arginine 116, threonine 135–glutamate 137, glutamine 156, tyrosine 170, and glutamine 180. The Proton donor/acceptor role is filled by glutamate 137.

It belongs to the dCTP deaminase family. In terms of assembly, homotrimer.

It carries out the reaction dCTP + H2O + H(+) = dUTP + NH4(+). It participates in pyrimidine metabolism; dUMP biosynthesis; dUMP from dCTP (dUTP route): step 1/2. In terms of biological role, catalyzes the deamination of dCTP to dUTP. The protein is dCTP deaminase of Marinobacter nauticus (strain ATCC 700491 / DSM 11845 / VT8) (Marinobacter aquaeolei).